A 126-amino-acid polypeptide reads, in one-letter code: C-type natriuretic peptide 2 (126 aa).

An N-terminal signal peptide occupies residues 1-22; that stretch reads MAVCSSSSLILLTVFLSVAVET. A propeptide spanning residues 23–102 is cleaved from the precursor; it reads RPSSDRDEEQ…REKTRRWGRK (80 aa). The disordered stretch occupies residues 44-80; sequence SLILAPPTSNDSTEGSSGSPEPPTPSEAPVLIHGDRG. Cys110 and Cys126 are oxidised to a cystine.

This sequence belongs to the natriuretic peptide family. Brain and spinal cord.

The protein localises to the secreted. Its function is as follows. Exhibits natriuretic and vasodepressant activity. Has cGMP-stimulating activity. May help to regulate body fluid homeostasis in a variety of aquatic environments. The sequence is that of C-type natriuretic peptide 2 from Oryzias latipes (Japanese rice fish).